A 536-amino-acid chain; its full sequence is MSFKSIFLTGGVVSSLGKGLTAASLALLLERQGLKVAMLKLDPYLNVDPGTMNPYEHGEVYVTDDGVETDLDLGHYHRFSSVQLSKHSTATSGQIYTRVITKERNGEFLGSTVQVIPHVTNEIINVIQACAEHHKPDVLIIEIGGTIGDIESLPFLEAVRQFRCEHPQDCLSIHMTYVPYLKSAKEIKTKPTQHSVQNLRSIGISPDVILCRSEVSLSSEVKRKISLFCNVPENAVFNAIDLENSIYEMPLLLARENIVDFLLSKFGFSPKSLDLTDWQNLVTTLCDGNRHLVRIGLVGKYLEHKDAYKSVFESLSHASIPANCSLEIVPISPESEALTNQLSQCDGCLIPGGFGTRSWEGKIAAARYCRDNNIPCFGICLGMQALVVEYARYALSLPLANSLEMDPNTPDPVVCMMQGQDTMIKGGTMRLGAYPCQITPKSLAFEAYKTDLVQERHRHRYEVNPAYVDLLQKNGLRIVGVCPQGDLCEIIEIPNHRWMLGVQFHPEFLSKLAAPHPLFVKFLSAALDYSLEKGRE.

The tract at residues 1-268 (MSFKSIFLTG…VDFLLSKFGF (268 aa)) is amidoligase domain. S14 serves as a coordination point for CTP. S14 is a binding site for UTP. Position 15–20 (15–20 (SLGKGL)) interacts with ATP. Y55 lines the L-glutamine pocket. Residue D72 coordinates ATP. 2 residues coordinate Mg(2+): D72 and E142. CTP is bound by residues 149–151 (DIE), 188–193 (KTKPTQ), and K224. Residues 188–193 (KTKPTQ) and K224 contribute to the UTP site. One can recognise a Glutamine amidotransferase type-1 domain in the interval 294–532 (RIGLVGKYLE…LSAALDYSLE (239 aa)). G353 is an L-glutamine binding site. Catalysis depends on C380, which acts as the Nucleophile; for glutamine hydrolysis. Residues 381–384 (LGMQ), E404, and R460 contribute to the L-glutamine site. Active-site residues include H505 and E507.

It belongs to the CTP synthase family. As to quaternary structure, homotetramer.

It catalyses the reaction UTP + L-glutamine + ATP + H2O = CTP + L-glutamate + ADP + phosphate + 2 H(+). The catalysed reaction is L-glutamine + H2O = L-glutamate + NH4(+). It carries out the reaction UTP + NH4(+) + ATP = CTP + ADP + phosphate + 2 H(+). It functions in the pathway pyrimidine metabolism; CTP biosynthesis via de novo pathway; CTP from UDP: step 2/2. Allosterically activated by GTP, when glutamine is the substrate; GTP has no effect on the reaction when ammonia is the substrate. The allosteric effector GTP functions by stabilizing the protein conformation that binds the tetrahedral intermediate(s) formed during glutamine hydrolysis. Inhibited by the product CTP, via allosteric rather than competitive inhibition. Functionally, catalyzes the ATP-dependent amination of UTP to CTP with either L-glutamine or ammonia as the source of nitrogen. Regulates intracellular CTP levels through interactions with the four ribonucleotide triphosphates. The chain is CTP synthase from Chlamydia muridarum (strain MoPn / Nigg).